A 427-amino-acid polypeptide reads, in one-letter code: D-inositol 3-phosphate glycosyltransferase (427 aa).

His12 contacts 1D-myo-inositol 3-phosphate. Residues 18-19 (QP) and Gly26 contribute to the UDP-N-acetyl-alpha-D-glucosamine site. 1D-myo-inositol 3-phosphate is bound by residues 23-28 (DAGGMN), Lys81, Tyr113, Thr137, and Arg157. Residues Arg234, Lys239, and Arg297 each contribute to the UDP-N-acetyl-alpha-D-glucosamine site. The Mg(2+) site is built by Tyr306, Gln307, and Ala309. Glu319 and Glu327 together coordinate UDP-N-acetyl-alpha-D-glucosamine. Residue Thr333 coordinates Mg(2+).

The protein belongs to the glycosyltransferase group 1 family. MshA subfamily. Homodimer.

The catalysed reaction is 1D-myo-inositol 3-phosphate + UDP-N-acetyl-alpha-D-glucosamine = 1D-myo-inositol 2-acetamido-2-deoxy-alpha-D-glucopyranoside 3-phosphate + UDP + H(+). Its function is as follows. Catalyzes the transfer of a N-acetyl-glucosamine moiety to 1D-myo-inositol 3-phosphate to produce 1D-myo-inositol 2-acetamido-2-deoxy-glucopyranoside 3-phosphate in the mycothiol biosynthesis pathway. This chain is D-inositol 3-phosphate glycosyltransferase, found in Corynebacterium diphtheriae (strain ATCC 700971 / NCTC 13129 / Biotype gravis).